A 445-amino-acid chain; its full sequence is Acyl-lipid (7-3)-desaturase (445 aa).

Residues Val11–Asp91 enclose the Cytochrome b5 heme-binding domain. Heme is bound by residues His50 and His73. Transmembrane regions (helical) follow at residues Tyr126 to Leu146 and Gly148 to Ile168. Positions His170–His174 match the Histidine box-1 motif. The short motif at His205–His210 is the Histidine box-2 element. A run of 3 helical transmembrane segments spans residues Ile247–Leu267, Leu283–Leu303, and Ala312–Ile332. The Histidine box-3 signature appears at Gln380–His384.

This sequence belongs to the fatty acid desaturase type 1 family. Requires Fe(2+) as cofactor.

Its subcellular location is the membrane. The catalysed reaction is a (7Z,10Z,13Z,16Z,19Z)-docosapentaenoyl-containing glycerolipid + 2 Fe(II)-[cytochrome b5] + O2 + 2 H(+) = a (4Z,7Z,10Z,13Z,16Z,19Z)-docosahexaenoyl-containing glycerolipid + 2 Fe(III)-[cytochrome b5] + 2 H2O. It catalyses the reaction a (7Z,10Z,13Z,16Z)-docosatetraenoyl-containing glycerolipid + 2 Fe(II)-[cytochrome b5] + O2 + 2 H(+) = a (4Z,7Z,10Z,13Z,16Z)-docosapentaenoyl-containing glycerolipid + 2 Fe(III)-[cytochrome b5] + 2 H2O. In terms of biological role, fatty acid desaturase that introduces a cis double bond at the 4-position in 22-carbon polyunsaturated fatty acids that contain a Delta(7) double bond, resulting in the production of delta-4 desaturated fatty acid docosahexanoic acid (DHA). Mediates desaturation of 22:5n-3 and 22:4n-6 into 22:6n-3 and 22:5n-6 respectively. This is Acyl-lipid (7-3)-desaturase from Diacronema lutheri (Unicellular marine alga).